Consider the following 471-residue polypeptide: Glutamate--tRNA ligase (471 aa).

Positions 9 to 19 (PSPTGYLHVGG) match the 'HIGH' region motif. Zn(2+) is bound by residues cysteine 98, cysteine 100, cysteine 125, and histidine 127. Positions 237-241 (KLSKR) match the 'KMSKS' region motif. Lysine 240 serves as a coordination point for ATP.

It belongs to the class-I aminoacyl-tRNA synthetase family. Glutamate--tRNA ligase type 1 subfamily. As to quaternary structure, monomer. Zn(2+) serves as cofactor.

The protein localises to the cytoplasm. The enzyme catalyses tRNA(Glu) + L-glutamate + ATP = L-glutamyl-tRNA(Glu) + AMP + diphosphate. Its function is as follows. Catalyzes the attachment of glutamate to tRNA(Glu) in a two-step reaction: glutamate is first activated by ATP to form Glu-AMP and then transferred to the acceptor end of tRNA(Glu). The polypeptide is Glutamate--tRNA ligase (Enterobacter sp. (strain 638)).